Here is a 156-residue protein sequence, read N- to C-terminus: MPVEVIPVLHNVSSVQRVVDMARLSYSLGLDTLVVTKAYGGAAQSGVPEAMRLALKLGKSLVVLPELRDAVNLLSPTHVLAVTPSRAERLVGPGGLEGLEGRVLVVFSGGEPELDPSEAAGAIRVYIEGVEGKVGPIAEAALILYFLLRGGGDGRG.

It to M.jannaschii MJ1199.

The enzyme catalyses Endonucleolytic cleavage of DNA to give specific double-stranded fragments with terminal 5'-phosphates.. A putative type II restriction enzyme, its methylase would be APE_2002. The protein is Putative type II restriction enzyme ApeKORF2002P of Aeropyrum pernix (strain ATCC 700893 / DSM 11879 / JCM 9820 / NBRC 100138 / K1).